A 278-amino-acid polypeptide reads, in one-letter code: Dehydrogenase/reductase SDR family member 4 (278 aa).

An NADP(+)-binding site is contributed by 36 to 60 (LVTASTDGIGFAIARRLAQDGAHVV). The residue at position 92 (Lys92) is an N6-acetyllysine; alternate. At Lys92 the chain carries N6-succinyllysine; alternate. The residue at position 105 (Lys105) is an N6-acetyllysine. Position 169 (Ser169) interacts with substrate. Tyr182 (proton acceptor) is an active-site residue. Lys186 lines the NADP(+) pocket. Position 216 is an N6-acetyllysine; alternate (Lys216). Residue Lys216 is modified to N6-succinyllysine; alternate. Ser220 is modified (phosphoserine). N6-succinyllysine is present on residues Lys227 and Lys234. The short motif at 276 to 278 (SRL) is the Peroxisomal targeting signal element.

The protein belongs to the short-chain dehydrogenases/reductases (SDR) family. As to quaternary structure, homotetramer.

The protein resides in the peroxisome. It carries out the reaction a secondary alcohol + NADP(+) = a ketone + NADPH + H(+). It catalyses the reaction 3beta-hydroxy-5beta-pregnane-20-one + NADP(+) = 5beta-pregnan-3,20-dione + NADPH + H(+). The enzyme catalyses 5beta-dihydrotestosterone + NADPH + H(+) = 5beta-androstane-3beta,17beta-diol + NADP(+). The catalysed reaction is 5beta-androstane-3,17-dione + NADPH + H(+) = 3beta-hydroxy-5beta-androstane-17-one + NADP(+). It carries out the reaction isatin + NADPH + H(+) = 3-hydroxyindolin-2-one + NADP(+). It catalyses the reaction lithocholate + NADP(+) = 3-oxo-5beta-cholan-24-oate + NADPH + H(+). The enzyme catalyses 3-oxo-5beta-cholan-24-oate + NADPH + H(+) = isolithocholate + NADP(+). In terms of biological role, NADPH-dependent oxidoreductase which catalyzes the reduction of a variety of compounds bearing carbonyl groups including ketosteroids, alpha-dicarbonyl compounds, aldehydes, aromatic ketones and quinones. Reduces 3-ketosteroids and benzil into 3beta-hydroxysteroids and R-benzoin, respectively, in contrast to the stereoselectivity of non-primate DHRS4s which produce 3alpha-hydroxysteroids and S-benzoin. Diplays low activity toward all-trans-retinal and no activity toward 9-cis-retinal as compared to non-primate mammals. In the reverse reaction, catalyze the NAD-dependent oxidation of 3beta-hydroxysteroids and alcohol, but with much lower efficiency. Involved in the metabolism of 3beta-hydroxysteroids, isatin and xenobiotic carbonyl compounds. This Pongo abelii (Sumatran orangutan) protein is Dehydrogenase/reductase SDR family member 4 (DHRS4).